A 91-amino-acid chain; its full sequence is MGAMQPMHWLIVAVVVVILFGSKKLPDAARGLGRSLRIFKSEVKEMQNDDAAPASAPVAQPAPAQLPTANTAVVANGAAAPVAQPTEVKPL.

A helical membrane pass occupies residues 1 to 21 (MGAMQPMHWLIVAVVVVILFG).

Belongs to the TatA/E family. The Tat system comprises two distinct complexes: a TatABC complex, containing multiple copies of TatA, TatB and TatC subunits, and a separate TatA complex, containing only TatA subunits. Substrates initially bind to the TatABC complex, which probably triggers association of the separate TatA complex to form the active translocon.

Its subcellular location is the cell membrane. Its function is as follows. Part of the twin-arginine translocation (Tat) system that transports large folded proteins containing a characteristic twin-arginine motif in their signal peptide across membranes. TatA could form the protein-conducting channel of the Tat system. The polypeptide is Sec-independent protein translocase protein TatA (Rhodococcus erythropolis (strain PR4 / NBRC 100887)).